Reading from the N-terminus, the 81-residue chain is ATP synthase subunit c, chloroplastic (81 aa).

Transmembrane regions (helical) follow at residues 3-23 (PLIAAASVIAAGLAVGLASIG) and 57-77 (LAFMEALTIYGLVVALALLFA).

Belongs to the ATPase C chain family. As to quaternary structure, F-type ATPases have 2 components, F(1) - the catalytic core - and F(0) - the membrane proton channel. F(1) has five subunits: alpha(3), beta(3), gamma(1), delta(1), epsilon(1). F(0) has four main subunits: a(1), b(1), b'(1) and c(10-14). The alpha and beta chains form an alternating ring which encloses part of the gamma chain. F(1) is attached to F(0) by a central stalk formed by the gamma and epsilon chains, while a peripheral stalk is formed by the delta, b and b' chains.

The protein localises to the plastid. Its subcellular location is the chloroplast thylakoid membrane. Its function is as follows. F(1)F(0) ATP synthase produces ATP from ADP in the presence of a proton or sodium gradient. F-type ATPases consist of two structural domains, F(1) containing the extramembraneous catalytic core and F(0) containing the membrane proton channel, linked together by a central stalk and a peripheral stalk. During catalysis, ATP synthesis in the catalytic domain of F(1) is coupled via a rotary mechanism of the central stalk subunits to proton translocation. Key component of the F(0) channel; it plays a direct role in translocation across the membrane. A homomeric c-ring of between 10-14 subunits forms the central stalk rotor element with the F(1) delta and epsilon subunits. The chain is ATP synthase subunit c, chloroplastic from Agrostis stolonifera (Creeping bentgrass).